We begin with the raw amino-acid sequence, 206 residues long: RNA pyrophosphohydrolase (206 aa).

Residues 6–150 (GYRPNVGIVI…KRDVYRKVMK (145 aa)) enclose the Nudix hydrolase domain. The Nudix box signature appears at 38–59 (GGINEGENIETAMYRELYEEVG). Positions 162-191 (KPETVEKPRVERTEKRDFQKRDNQKREFRK) are enriched in basic and acidic residues. The segment at 162–206 (KPETVEKPRVERTEKRDFQKRDNQKREFRKSARMWNNSHQKGKAQ) is disordered.

It belongs to the Nudix hydrolase family. RppH subfamily. The cofactor is a divalent metal cation.

Its function is as follows. Accelerates the degradation of transcripts by removing pyrophosphate from the 5'-end of triphosphorylated RNA, leading to a more labile monophosphorylated state that can stimulate subsequent ribonuclease cleavage. This is RNA pyrophosphohydrolase from Actinobacillus pleuropneumoniae serotype 5b (strain L20).